The primary structure comprises 432 residues: Probable M18 family aminopeptidase 2 (432 aa).

Residues histidine 86, histidine 157, and histidine 408 each coordinate Zn(2+).

Belongs to the peptidase M18 family. The cofactor is Zn(2+).

In Streptomyces coelicolor (strain ATCC BAA-471 / A3(2) / M145), this protein is Probable M18 family aminopeptidase 2 (apeB).